The chain runs to 400 residues: Chalcone synthase WHP1 (400 aa).

The active site involves Cys-167.

This sequence belongs to the thiolase-like superfamily. Chalcone/stilbene synthases family.

The enzyme catalyses (E)-4-coumaroyl-CoA + 3 malonyl-CoA + 3 H(+) = 2',4,4',6'-tetrahydroxychalcone + 3 CO2 + 4 CoA. It participates in secondary metabolite biosynthesis; flavonoid biosynthesis. Its function is as follows. The primary product of this enzyme is 4,2',4',6'-tetrahydroxychalcone (also termed naringenin-chalcone or chalcone) which can under specific conditions spontaneously isomerize into naringenin. This Zea mays (Maize) protein is Chalcone synthase WHP1 (WHP1).